The primary structure comprises 188 residues: Elongation factor P (188 aa).

This sequence belongs to the elongation factor P family.

Its subcellular location is the cytoplasm. Its pathway is protein biosynthesis; polypeptide chain elongation. In terms of biological role, involved in peptide bond synthesis. Stimulates efficient translation and peptide-bond synthesis on native or reconstituted 70S ribosomes in vitro. Probably functions indirectly by altering the affinity of the ribosome for aminoacyl-tRNA, thus increasing their reactivity as acceptors for peptidyl transferase. In Methylorubrum extorquens (strain CM4 / NCIMB 13688) (Methylobacterium extorquens), this protein is Elongation factor P.